The sequence spans 369 residues: Probable serine/threonine-protein kinase DDB_G0291350 (369 aa).

Residues tyrosine 22–isoleucine 367 enclose the Protein kinase domain. ATP contacts are provided by residues leucine 28–valine 36 and lysine 51. Aspartate 159 serves as the catalytic Proton acceptor. The disordered stretch occupies residues asparagine 169 to serine 225. The segment covering asparagine 175–asparagine 221 has biased composition (low complexity).

It belongs to the protein kinase superfamily. Ser/Thr protein kinase family.

The catalysed reaction is L-seryl-[protein] + ATP = O-phospho-L-seryl-[protein] + ADP + H(+). The enzyme catalyses L-threonyl-[protein] + ATP = O-phospho-L-threonyl-[protein] + ADP + H(+). The polypeptide is Probable serine/threonine-protein kinase DDB_G0291350 (Dictyostelium discoideum (Social amoeba)).